Reading from the N-terminus, the 151-residue chain is Large ribosomal subunit protein uL15 (151 aa).

Positions 1-57 are disordered; the sequence is MTLRLDSLKSNKGARRRKLRKGRGIAAGQGASCGFGMRGQKSRSGRPTRPGFEGGQM. A compositionally biased stretch (basic residues) spans 12–23; sequence KGARRRKLRKGR. Residues 25–37 are compositionally biased toward gly residues; it reads IAAGQGASCGFGM.

This sequence belongs to the universal ribosomal protein uL15 family. In terms of assembly, part of the 50S ribosomal subunit.

In terms of biological role, binds to the 23S rRNA. This Synechococcus sp. (strain CC9605) protein is Large ribosomal subunit protein uL15.